Reading from the N-terminus, the 340-residue chain is Anthranilate phosphoribosyltransferase (340 aa).

5-phospho-alpha-D-ribose 1-diphosphate contacts are provided by residues G84, 87-88 (GD), T92, 94-97 (NIST), 112-120 (KHGSRSVSS), and S124. G84 provides a ligand contact to anthranilate. Residue S96 coordinates Mg(2+). Anthranilate is bound at residue R170. The Mg(2+) site is built by D228 and E229.

Belongs to the anthranilate phosphoribosyltransferase family. In terms of assembly, homodimer. It depends on Mg(2+) as a cofactor.

The catalysed reaction is N-(5-phospho-beta-D-ribosyl)anthranilate + diphosphate = 5-phospho-alpha-D-ribose 1-diphosphate + anthranilate. It participates in amino-acid biosynthesis; L-tryptophan biosynthesis; L-tryptophan from chorismate: step 2/5. Its function is as follows. Catalyzes the transfer of the phosphoribosyl group of 5-phosphorylribose-1-pyrophosphate (PRPP) to anthranilate to yield N-(5'-phosphoribosyl)-anthranilate (PRA). The sequence is that of Anthranilate phosphoribosyltransferase from Psychromonas ingrahamii (strain DSM 17664 / CCUG 51855 / 37).